A 735-amino-acid polypeptide reads, in one-letter code: Exocyst complex component 7 (735 aa).

2 coiled-coil regions span residues 5–42 (QEAS…TKNM) and 63–85 (VHKQ…SCLD). Serine 133 is subject to Phosphoserine. A disordered region spans residues 239-268 (HKSSSSSGVPYSPAIPNKRKDTPTKKPVKR).

This sequence belongs to the EXO70 family. As to quaternary structure, the exocyst complex is composed of EXOC1, EXOC2, EXOC3, EXOC4, EXOC5, EXOC6, EXOC7 and EXOC8. Interacts with ARHQ in a GTP-dependent manner. Interacts with RAB11FIP3. Abundant in the ventricular zone, the outer subventricular zone and the cortical plate of the fetal cortex.

Its subcellular location is the cytoplasm. It is found in the cytosol. It localises to the cell membrane. The protein localises to the midbody. The protein resides in the midbody ring. Its function is as follows. Component of the exocyst complex involved in the docking of exocytic vesicles with fusion sites on the plasma membrane. In adipocytes, plays a crucial role in targeting SLC2A4 vesicle to the plasma membrane in response to insulin, perhaps directing the vesicle to the precise site of fusion. It is required for neuron survival and plays an essential role in cortical development. This is Exocyst complex component 7 (EXOC7) from Homo sapiens (Human).